A 584-amino-acid polypeptide reads, in one-letter code: HERV-H_2q24.3 provirus ancestral Env polyprotein (584 aa).

The first 35 residues, 1–35 (MIFAGKAPSNTSTLMKFYSLLLYSLLFSFPFLCHP), serve as a signal peptide directing secretion. At 36 to 523 (LPLPSYLHHT…WALSNWMSWV (488 aa)) the chain is on the extracellular side. N47 carries an N-linked (GlcNAc...) asparagine glycan. Positions 64 to 67 (CWLC) match the CXXC motif. N-linked (GlcNAc...) asparagine glycosylation is found at N199, N222, N265, N283, N352, and N370. Residues 388-408 (VIPLIPLMVGLGLSASTVALG) form a fusion peptide region. Positions 454–470 (LQNRRGLDLLTAEKGGL) match the CKS-17 motif. An intrachain disulfide couples C471 to C478. The CX6CC motif lies at 471–479 (CIFLNEECC). An N-linked (GlcNAc...) asparagine glycan is attached at N483. The chain crosses the membrane as a helical span at residues 524-544 (LPIVSPLIPIFLLLLFGPCIF). Residues 545–584 (RLVSQFIQNRIQAITNHSIRQMFLLTSPQYHPLPQDLPSA) lie on the Cytoplasmic side of the membrane.

Belongs to the gamma type-C retroviral envelope protein family. HERV class-I H env subfamily. As to quaternary structure, the surface (SU) and transmembrane (TM) proteins form a heterodimer. SU and TM are attached by noncovalent interactions or by a labile interchain disulfide bond. Specific enzymatic cleavages in vivo yield the mature SU and TM proteins. Post-translationally, the CXXC motif is highly conserved across a broad range of retroviral envelope proteins. It is thought to participate in the formation of a labile disulfide bond possibly with the CX6CC motif present in the transmembrane protein. Isomerization of the intersubunit disulfide bond to an SU intrachain disulfide bond is thought to occur upon receptor recognition in order to allow membrane fusion. As to expression, low expression in skin and testis. No expression in several cell lines.

It localises to the virion. It is found in the cell membrane. Its function is as follows. Retroviral envelope proteins mediate receptor recognition and membrane fusion during early infection. Endogenous envelope proteins may have kept, lost or modified their original function during evolution. This endogenous envelope protein has lost its original fusogenic properties but has immunosuppressive properties in vivo. SU mediates receptor recognition. Functionally, TM anchors the envelope heterodimer to the viral membrane through one transmembrane domain. The other hydrophobic domain, called fusion peptide, mediates fusion of the viral membrane with the target cell membrane. This is HERV-H_2q24.3 provirus ancestral Env polyprotein from Homo sapiens (Human).